A 369-amino-acid chain; its full sequence is Methylthioribose-1-phosphate isomerase (369 aa).

Residues 54–56 (RGA), Arg-95, and Gln-208 each bind substrate. Asp-249 acts as the Proton donor in catalysis. 259–260 (NK) contributes to the substrate binding site.

It belongs to the eIF-2B alpha/beta/delta subunits family. MtnA subfamily.

The catalysed reaction is 5-(methylsulfanyl)-alpha-D-ribose 1-phosphate = 5-(methylsulfanyl)-D-ribulose 1-phosphate. The protein operates within amino-acid biosynthesis; L-methionine biosynthesis via salvage pathway; L-methionine from S-methyl-5-thio-alpha-D-ribose 1-phosphate: step 1/6. In terms of biological role, catalyzes the interconversion of methylthioribose-1-phosphate (MTR-1-P) into methylthioribulose-1-phosphate (MTRu-1-P). This chain is Methylthioribose-1-phosphate isomerase, found in Desulfosudis oleivorans (strain DSM 6200 / JCM 39069 / Hxd3) (Desulfococcus oleovorans).